A 199-amino-acid polypeptide reads, in one-letter code: Probable cobalt-precorrin-6B C(15)-methyltransferase (decarboxylating) (199 aa).

S-adenosyl-L-methionine contacts are provided by residues threonine 24, 48-52, aspartate 72, and alanine 101; that span reads GCGTG.

This sequence belongs to the methyltransferase superfamily. Archaeal-type CbiT family.

It catalyses the reaction Co-precorrin-6B + S-adenosyl-L-methionine = Co-precorrin-7 + S-adenosyl-L-homocysteine + CO2. Its pathway is cofactor biosynthesis; adenosylcobalamin biosynthesis; cob(II)yrinate a,c-diamide from sirohydrochlorin (anaerobic route): step 8/10. In terms of biological role, catalyzes the methylation of C-15 in cobalt-precorrin-6B followed by the decarboxylation of C-12 to form cobalt-precorrin-7. The polypeptide is Probable cobalt-precorrin-6B C(15)-methyltransferase (decarboxylating) (Saccharolobus islandicus (strain L.S.2.15 / Lassen #1) (Sulfolobus islandicus)).